A 184-amino-acid polypeptide reads, in one-letter code: tRNA (cytidine(56)-2'-O)-methyltransferase (184 aa).

S-adenosyl-L-methionine contacts are provided by residues L87, 112-116 (GAEKV), and 130-137 (VANQPHSE).

It belongs to the aTrm56 family. Homodimer.

The protein resides in the cytoplasm. The catalysed reaction is cytidine(56) in tRNA + S-adenosyl-L-methionine = 2'-O-methylcytidine(56) in tRNA + S-adenosyl-L-homocysteine + H(+). Functionally, specifically catalyzes the AdoMet-dependent 2'-O-ribose methylation of cytidine at position 56 in tRNAs. The sequence is that of tRNA (cytidine(56)-2'-O)-methyltransferase from Methanocorpusculum labreanum (strain ATCC 43576 / DSM 4855 / Z).